The sequence spans 157 residues: 6,7-dimethyl-8-ribityllumazine synthase 2 (157 aa).

Residues tryptophan 21, 55-57 (AYE), and 79-81 (FVV) each bind 5-amino-6-(D-ribitylamino)uracil. Arginine 87 acts as the Proton donor in catalysis. Serine 112 is a binding site for 5-amino-6-(D-ribitylamino)uracil. Residue histidine 126 participates in (2S)-2-hydroxy-3-oxobutyl phosphate binding.

Belongs to the DMRL synthase family. Homodecamer, arranged as a dimer of pentamers.

The enzyme catalyses (2S)-2-hydroxy-3-oxobutyl phosphate + 5-amino-6-(D-ribitylamino)uracil = 6,7-dimethyl-8-(1-D-ribityl)lumazine + phosphate + 2 H2O + H(+). It functions in the pathway cofactor biosynthesis; riboflavin biosynthesis; riboflavin from 2-hydroxy-3-oxobutyl phosphate and 5-amino-6-(D-ribitylamino)uracil: step 1/2. Functionally, catalyzes the formation of 6,7-dimethyl-8-ribityllumazine by condensation of 5-amino-6-(D-ribitylamino)uracil with 3,4-dihydroxy-2-butanone 4-phosphate. This is the penultimate step in the biosynthesis of riboflavin. In Mesorhizobium japonicum (strain LMG 29417 / CECT 9101 / MAFF 303099) (Mesorhizobium loti (strain MAFF 303099)), this protein is 6,7-dimethyl-8-ribityllumazine synthase 2 (ribH2).